Consider the following 403-residue polypeptide: Sulfate adenylyltransferase (403 aa).

This sequence belongs to the sulfate adenylyltransferase family.

The catalysed reaction is sulfate + ATP + H(+) = adenosine 5'-phosphosulfate + diphosphate. Its pathway is sulfur metabolism; hydrogen sulfide biosynthesis; sulfite from sulfate: step 1/3. The protein is Sulfate adenylyltransferase of Pelodictyon phaeoclathratiforme (strain DSM 5477 / BU-1).